The primary structure comprises 88 residues: Small ribosomal subunit protein bS20 (88 aa).

Basic residues predominate over residues 1 to 21; the sequence is MANSKSAKKRALQSEKRRQHN. Residues 1 to 26 are disordered; the sequence is MANSKSAKKRALQSEKRRQHNASRSS.

This sequence belongs to the bacterial ribosomal protein bS20 family.

In terms of biological role, binds directly to 16S ribosomal RNA. The chain is Small ribosomal subunit protein bS20 from Shewanella halifaxensis (strain HAW-EB4).